We begin with the raw amino-acid sequence, 603 residues long: Sorting nexin-41 (603 aa).

A disordered region spans residues 1–36 (MNSFRESDEEDNNPFSGTNHLYASGIGAVPEGDDDF). A PX domain is found at 121–241 (AEGSLGALRI…QKFLNPEYIW (121 aa)). R159, S161, K185, and R208 together coordinate a 1,2-diacyl-sn-glycero-3-phospho-(1D-myo-inositol-3-phosphate).

It belongs to the sorting nexin family.

It is found in the endosome membrane. The protein resides in the endomembrane system. May be required for cytoplasm to vacuole transport (Cvt) and pexophagy. This Eremothecium gossypii (strain ATCC 10895 / CBS 109.51 / FGSC 9923 / NRRL Y-1056) (Yeast) protein is Sorting nexin-41 (SNX41).